Consider the following 634-residue polypeptide: Chaperone protein HtpG (634 aa).

Residues 1–342 (MSVETQKETL…SNDLSLNVSR (342 aa)) form an a; substrate-binding region. The segment at 343-559 (EILQKDPIID…EQDLGLQMRQ (217 aa)) is b. The tract at residues 560-634 (ILEASGQKVP…LNKLLVELSV (75 aa)) is c.

Belongs to the heat shock protein 90 family. Homodimer.

Its subcellular location is the cytoplasm. Its function is as follows. Molecular chaperone. Has ATPase activity. This is Chaperone protein HtpG from Pseudomonas fluorescens (strain ATCC BAA-477 / NRRL B-23932 / Pf-5).